The following is a 60-amino-acid chain: Mastoparan (60 aa).

A signal peptide spans 1 to 27 (MKDTILILFTAFIALLGFFGMSAEALA). AXPX repeat units follow at residues 27–30 (ADPL), 31–34 (ADPS), 35–38 (AGPN), and 41–44 (ADPE). Positions 28-45 (DPLADPSAGPNAEADPEA) are excised as a propeptide. Leu59 carries the post-translational modification Leucine amide.

This sequence belongs to the MCD family. Mastoparan subfamily. Expressed by the venom gland.

The protein resides in the secreted. It localises to the target cell membrane. In terms of biological role, mast cell degranulating peptide. Its mast cell degranulation activity may be related to the activation of G-protein coupled receptors in mast cells as well as interaction with other proteins located in cell endosomal membranes in the mast cells. Has a membranolytic activity on human glioblastoma multiforme cells (brain tumor cells) that leads to cell necrosis. The protein is Mastoparan of Vespa orientalis (Oriental hornet).